Consider the following 475-residue polypeptide: Probable phenylalanine--tRNA ligase alpha subunit (475 aa).

The segment at threonine 2 to lysine 151 is contains the major tRNA-Phe binding sites. L-phenylalanine-binding positions include threonine 309, glutamine 351–glutamate 353, and tyrosine 391. Residue glutamate 393 participates in Mg(2+) binding. Phenylalanine 417 provides a ligand contact to L-phenylalanine.

It belongs to the class-II aminoacyl-tRNA synthetase family. Phe-tRNA synthetase alpha subunit type 2 subfamily. Tetramer of two alpha and two beta subunits. Mg(2+) is required as a cofactor.

It is found in the cytoplasm. The enzyme catalyses tRNA(Phe) + L-phenylalanine + ATP = L-phenylalanyl-tRNA(Phe) + AMP + diphosphate + H(+). This Encephalitozoon cuniculi (strain GB-M1) (Microsporidian parasite) protein is Probable phenylalanine--tRNA ligase alpha subunit.